A 190-amino-acid polypeptide reads, in one-letter code: B3 domain-containing protein At1g49475 (190 aa).

The disordered stretch occupies residues 1–27; sequence MRNMHTNRRSPGPITSAATQRRLKPEP. A DNA-binding region (TF-B3) is located at residues 33–125; sequence KFIKIILLSR…CFRVVIFDVS (93 aa).

It is found in the nucleus. The sequence is that of B3 domain-containing protein At1g49475 from Arabidopsis thaliana (Mouse-ear cress).